The following is a 236-amino-acid chain: Purine nucleoside phosphorylase DeoD-type (236 aa).

A purine D-ribonucleoside is bound at residue histidine 5. Residues glycine 21, arginine 25, arginine 44, and 88-91 contribute to the phosphate site; that span reads RIGS. Residues 180–182 and 204–205 contribute to the a purine D-ribonucleoside site; these read EME and SD. The active-site Proton donor is the aspartate 205.

This sequence belongs to the PNP/UDP phosphorylase family. Homohexamer; trimer of homodimers.

It carries out the reaction a purine D-ribonucleoside + phosphate = a purine nucleobase + alpha-D-ribose 1-phosphate. The enzyme catalyses a purine 2'-deoxy-D-ribonucleoside + phosphate = a purine nucleobase + 2-deoxy-alpha-D-ribose 1-phosphate. Catalyzes the reversible phosphorolytic breakdown of the N-glycosidic bond in the beta-(deoxy)ribonucleoside molecules, with the formation of the corresponding free purine bases and pentose-1-phosphate. The polypeptide is Purine nucleoside phosphorylase DeoD-type (Hahella chejuensis (strain KCTC 2396)).